Reading from the N-terminus, the 242-residue chain is ATP synthase subunit a (242 aa).

The next 6 helical transmembrane spans lie at 29–49, 84–104, 114–134, 140–160, 181–201, and 206–226; these read SAVAMIFVSIAASMLLITAFV, FFPLILTLFLFISLGNILGMV, IIVTFSLAMIVFTTTLVYGIY, FFSLFLPKNIPLWLAPIMVII, VAGHILLKIIAWSIVSLTWLF, and IALVIVLIGFELFISILQAYI.

Belongs to the ATPase A chain family. In terms of assembly, F-type ATPases have 2 components, CF(1) - the catalytic core - and CF(0) - the membrane proton channel. CF(1) has five subunits: alpha(3), beta(3), gamma(1), delta(1), epsilon(1). CF(0) has three main subunits: a(1), b(2) and c(9-12). The alpha and beta chains form an alternating ring which encloses part of the gamma chain. CF(1) is attached to CF(0) by a central stalk formed by the gamma and epsilon chains, while a peripheral stalk is formed by the delta and b chains.

The protein resides in the cell inner membrane. Its function is as follows. Key component of the proton channel; it plays a direct role in the translocation of protons across the membrane. This is ATP synthase subunit a from Orientia tsutsugamushi (strain Ikeda) (Rickettsia tsutsugamushi).